The primary structure comprises 530 residues: Laccase-2 (530 aa).

The N-terminal stretch at 1-23 is a signal peptide; it reads MLLSSAFVGSCLAILNFAAAVSA. Plastocyanin-like domains lie at 36–154 and 167–311; these read NKVI…YDPE and TTII…RYTN. N-linked (GlcNAc...) asparagine glycosylation is present at asparagine 82. Histidine 88 and histidine 90 together coordinate Cu cation. 2 disulfide bridges follow: cysteine 109-cysteine 520 and cysteine 141-cysteine 228. A glycan (N-linked (GlcNAc...) asparagine) is linked at asparagine 120. Cu cation is bound by residues histidine 133 and histidine 135. Residues asparagine 191, asparagine 240, asparagine 292, asparagine 311, asparagine 366, asparagine 375, asparagine 392, and asparagine 412 are each glycosylated (N-linked (GlcNAc...) asparagine). The region spanning 379 to 504 is the Plastocyanin-like 3 domain; sequence YVNPTVPVLL…FAVVLAEAPQ (126 aa). Histidine 428, histidine 431, histidine 433, histidine 484, cysteine 485, histidine 486, and histidine 490 together coordinate Cu cation.

It belongs to the multicopper oxidase family. It depends on Cu cation as a cofactor.

The protein localises to the secreted. It carries out the reaction 4 hydroquinone + O2 = 4 benzosemiquinone + 2 H2O. Its activity is regulated as follows. Inhibited by chloride ions. Inhibited by citrate. Inhibited by oxalate. Activated by acetate. Functionally, in vitro, has activity towards 2,2'-azino-bis(3-ethylbenzthiazoline-6-sulfonic acid) (ABTS), 2,6-dimethoxy-phenol, and guaiacol. Although brown rot fungi preferentially degrade hemicellulose and cellulose, the enzyme may contribute to generating small amounts of lignin breakdown products required for catalytic reactions. The chain is Laccase-2 from Fomitopsis schrenkii (Brown rot fungus).